The sequence spans 230 residues: Ribose-5-phosphate isomerase A (230 aa).

Substrate is bound by residues 32 to 35, 85 to 88, and 98 to 101; these read TGST, DGAD, and KGGG. Residue E107 is the Proton acceptor of the active site. K125 serves as a coordination point for substrate.

The protein belongs to the ribose 5-phosphate isomerase family. In terms of assembly, homodimer.

It catalyses the reaction aldehydo-D-ribose 5-phosphate = D-ribulose 5-phosphate. It participates in carbohydrate degradation; pentose phosphate pathway; D-ribose 5-phosphate from D-ribulose 5-phosphate (non-oxidative stage): step 1/1. In terms of biological role, catalyzes the reversible conversion of ribose-5-phosphate to ribulose 5-phosphate. The polypeptide is Ribose-5-phosphate isomerase A (Burkholderia vietnamiensis (strain G4 / LMG 22486) (Burkholderia cepacia (strain R1808))).